Consider the following 739-residue polypeptide: Probable beta-glucosidase L (739 aa).

The first 17 residues, 1–17, serve as a signal peptide directing secretion; sequence MQTLFLSLLAAAVTVHA. N-linked (GlcNAc...) asparagine glycosylation is found at Asn-40 and Asn-224. Asp-252 is a catalytic residue. N-linked (GlcNAc...) asparagine glycosylation is present at Asn-398.

This sequence belongs to the glycosyl hydrolase 3 family.

The protein resides in the secreted. The catalysed reaction is Hydrolysis of terminal, non-reducing beta-D-glucosyl residues with release of beta-D-glucose.. The protein operates within glycan metabolism; cellulose degradation. Functionally, beta-glucosidases are one of a number of cellulolytic enzymes involved in the degradation of cellulosic biomass. Catalyzes the last step releasing glucose from the inhibitory cellobiose. The protein is Probable beta-glucosidase L (bglL) of Aspergillus fumigatus (strain ATCC MYA-4609 / CBS 101355 / FGSC A1100 / Af293) (Neosartorya fumigata).